The following is a 493-amino-acid chain: Dipeptide permease D (493 aa).

13 helical membrane-spanning segments follow: residues 14-34 (VVAL…LLIL), 49-69 (ELFS…GYLA), 91-111 (LVLG…AIIV), 138-158 (GGFS…PIAC), 167-187 (WAMG…IFLC), 212-232 (NWGW…VLFW), 235-255 (WSVY…AKIY), 267-287 (LGLI…AQQG), 312-332 (MFQS…AWLV), 344-364 (IWGK…ILTL), 379-399 (LMVL…PVAM), 413-433 (VLTG…AGVI), and 458-478 (VFEQ…LIWL).

The protein belongs to the major facilitator superfamily. Proton-dependent oligopeptide transporter (POT/PTR) (TC 2.A.17) family. DtpD subfamily.

Its subcellular location is the cell inner membrane. Functionally, probable proton-dependent permease that transports dipeptides. In Salmonella typhimurium (strain 14028s / SGSC 2262), this protein is Dipeptide permease D.